The chain runs to 112 residues: Cell cycle protein GpsB (112 aa).

The stretch at Leu32 to Ser75 forms a coiled coil.

The protein belongs to the GpsB family. As to quaternary structure, forms polymers through the coiled coil domains. Interacts with PBP1, MreC and EzrA.

The protein resides in the cytoplasm. Its function is as follows. Divisome component that associates with the complex late in its assembly, after the Z-ring is formed, and is dependent on DivIC and PBP2B for its recruitment to the divisome. Together with EzrA, is a key component of the system that regulates PBP1 localization during cell cycle progression. Its main role could be the removal of PBP1 from the cell pole after pole maturation is completed. Also contributes to the recruitment of PBP1 to the division complex. Not essential for septum formation. The polypeptide is Cell cycle protein GpsB (Streptococcus mutans serotype c (strain ATCC 700610 / UA159)).